The chain runs to 283 residues: Pantothenate synthetase (283 aa).

30 to 37 (MGNLHDGH) lines the ATP pocket. Residue histidine 37 is the Proton donor of the active site. A (R)-pantoate-binding site is contributed by glutamine 61. Glutamine 61 contributes to the beta-alanine binding site. Residue 149–152 (GEKD) coordinates ATP. Residue glutamine 155 participates in (R)-pantoate binding. Residue 186-189 (LSSR) participates in ATP binding.

This sequence belongs to the pantothenate synthetase family. In terms of assembly, homodimer.

Its subcellular location is the cytoplasm. It catalyses the reaction (R)-pantoate + beta-alanine + ATP = (R)-pantothenate + AMP + diphosphate + H(+). The protein operates within cofactor biosynthesis; (R)-pantothenate biosynthesis; (R)-pantothenate from (R)-pantoate and beta-alanine: step 1/1. Its function is as follows. Catalyzes the condensation of pantoate with beta-alanine in an ATP-dependent reaction via a pantoyl-adenylate intermediate. The sequence is that of Pantothenate synthetase from Escherichia coli O6:K15:H31 (strain 536 / UPEC).